The sequence spans 648 residues: DNA mismatch repair protein MutL (648 aa).

The segment at Ser385–Ala430 is disordered. Polar residues predominate over residues Leu396–Ala430.

Belongs to the DNA mismatch repair MutL/HexB family.

This protein is involved in the repair of mismatches in DNA. It is required for dam-dependent methyl-directed DNA mismatch repair. May act as a 'molecular matchmaker', a protein that promotes the formation of a stable complex between two or more DNA-binding proteins in an ATP-dependent manner without itself being part of a final effector complex. This chain is DNA mismatch repair protein MutL, found in Agathobacter rectalis (strain ATCC 33656 / DSM 3377 / JCM 17463 / KCTC 5835 / VPI 0990) (Eubacterium rectale).